A 423-amino-acid chain; its full sequence is Gamma-glutamyl phosphate reductase (423 aa).

Belongs to the gamma-glutamyl phosphate reductase family.

It localises to the cytoplasm. It carries out the reaction L-glutamate 5-semialdehyde + phosphate + NADP(+) = L-glutamyl 5-phosphate + NADPH + H(+). It participates in amino-acid biosynthesis; L-proline biosynthesis; L-glutamate 5-semialdehyde from L-glutamate: step 2/2. Catalyzes the NADPH-dependent reduction of L-glutamate 5-phosphate into L-glutamate 5-semialdehyde and phosphate. The product spontaneously undergoes cyclization to form 1-pyrroline-5-carboxylate. The sequence is that of Gamma-glutamyl phosphate reductase from Burkholderia orbicola (strain MC0-3).